The sequence spans 572 residues: Urease subunit alpha (572 aa).

The Urease domain maps to 136 to 572; sequence GGIDTHIHWI…VPLAQRYFLF (437 aa). His-141, His-143, and Lys-224 together coordinate Ni(2+). Lys-224 carries the post-translational modification N6-carboxylysine. A substrate-binding site is contributed by His-226. His-253 and His-279 together coordinate Ni(2+). Catalysis depends on His-327, which acts as the Proton donor. Asp-367 provides a ligand contact to Ni(2+).

Belongs to the metallo-dependent hydrolases superfamily. Urease alpha subunit family. As to quaternary structure, heterotrimer of UreA (gamma), UreB (beta) and UreC (alpha) subunits. Three heterotrimers associate to form the active enzyme. It depends on Ni cation as a cofactor. In terms of processing, carboxylation allows a single lysine to coordinate two nickel ions.

The protein localises to the cytoplasm. It catalyses the reaction urea + 2 H2O + H(+) = hydrogencarbonate + 2 NH4(+). It participates in nitrogen metabolism; urea degradation; CO(2) and NH(3) from urea (urease route): step 1/1. In Actinobacillus pleuropneumoniae serotype 7 (strain AP76), this protein is Urease subunit alpha.